A 263-amino-acid polypeptide reads, in one-letter code: MNTPAAARRFDVITLFPEMFAALTASGITRRALERGLYEIAFHSPRDFVSDPHRTVDDRPYGGGPGMVMLAEPLEKAIGRAKTAQEQALGAAGRVIYLSPQGRPLDHAKVVEMTALPALTLLCGRYEGVDQRLIDRCVDEELSLGDFVLSGGELPAMVLLDAIVRQLPGALNDADSAQEDSFVDGLLDCPHYTRPEIYAGERVPQVLLSGNHAAIRRWRLKQALGTTWRRRPDLLQGRTLSKEELSLLGEFRHEQEGVEGDIA.

S-adenosyl-L-methionine contacts are provided by residues Gly-124 and 144–149 (LGDFVL).

This sequence belongs to the RNA methyltransferase TrmD family. In terms of assembly, homodimer.

The protein resides in the cytoplasm. It carries out the reaction guanosine(37) in tRNA + S-adenosyl-L-methionine = N(1)-methylguanosine(37) in tRNA + S-adenosyl-L-homocysteine + H(+). Its function is as follows. Specifically methylates guanosine-37 in various tRNAs. The polypeptide is tRNA (guanine-N(1)-)-methyltransferase (Aromatoleum aromaticum (strain DSM 19018 / LMG 30748 / EbN1) (Azoarcus sp. (strain EbN1))).